We begin with the raw amino-acid sequence, 54 residues long: Ovomucoid (54 aa).

A Kazal-like domain is found at 4-54 (VDCSDYPKPACTLEYMPLCGSDNKTYGNRCNFCNAVVDSNGTLTLSHFGKC). 3 cysteine pairs are disulfide-bonded: C6–C36, C14–C33, and C22–C54. A glycan (N-linked (GlcNAc...) asparagine) is linked at N43.

Its subcellular location is the secreted. This chain is Ovomucoid, found in Dendrocygna viduata (White-faced whistling-duck).